The following is a 315-amino-acid chain: Olfactory receptor 5A1 (315 aa).

Topologically, residues 1 to 28 (MSITKAWNSSSVTMFILLGFTDHPELQA) are extracellular. An N-linked (GlcNAc...) asparagine glycan is attached at N8. Residues 29-52 (LLFVTFLGIYLTTLAWNLALIFLI) form a helical membrane-spanning segment. The Cytoplasmic segment spans residues 53 to 60 (RGDTHLHT). A helical membrane pass occupies residues 61–82 (PMYFFLSNLSFIDICYSSAVAP). Over 83–103 (NMLTDFFWEQKTISFVGCAAQ) the chain is Extracellular. C100 and C192 are oxidised to a cystine. Residues 104–123 (FFFFVGMGLSECLLLTAMAY) traverse the membrane as a helical segment. Topologically, residues 124–142 (DRYAAISSPLLYPTIMTQG) are cytoplasmic. The chain crosses the membrane as a helical span at residues 143–161 (LCTRMVVGAYVGGFLSSLI). At 162 to 198 (QASSIFRLHFCGPNIINHFFCDLPPVLALSCSDTFLS) the chain is on the extracellular side. A helical transmembrane segment spans residues 199–222 (QVVNFLVVVTVGGTSFLQLLISYG). The Cytoplasmic segment spans residues 223 to 239 (YIVSAVLKIPSAEGRWK). The helical transmembrane segment at 240–262 (ACNTCASHLMVVTLLFGTALFVY) threads the bilayer. The Extracellular segment spans residues 263–275 (LRPSSSYLLGRDK). Residues 276 to 295 (VVSVFYSLVIPMLNPLIYSL) form a helical membrane-spanning segment. Topologically, residues 296–315 (RNKEIKDALWKVLERKKVFS) are cytoplasmic.

It belongs to the G-protein coupled receptor 1 family.

The protein resides in the cell membrane. Functionally, odorant receptor. This chain is Olfactory receptor 5A1 (OR5A1), found in Homo sapiens (Human).